The sequence spans 155 residues: Ribosomal RNA large subunit methyltransferase H (155 aa).

S-adenosyl-L-methionine is bound by residues Leu73, Gly104, and 123 to 128 (LSPLTL).

Belongs to the RNA methyltransferase RlmH family. Homodimer.

The protein localises to the cytoplasm. The enzyme catalyses pseudouridine(1915) in 23S rRNA + S-adenosyl-L-methionine = N(3)-methylpseudouridine(1915) in 23S rRNA + S-adenosyl-L-homocysteine + H(+). Functionally, specifically methylates the pseudouridine at position 1915 (m3Psi1915) in 23S rRNA. The protein is Ribosomal RNA large subunit methyltransferase H of Pseudomonas syringae pv. tomato (strain ATCC BAA-871 / DC3000).